The primary structure comprises 301 residues: Phosphoribosylaminoimidazole-succinocarboxamide synthase (301 aa).

This sequence belongs to the SAICAR synthetase family.

It carries out the reaction 5-amino-1-(5-phospho-D-ribosyl)imidazole-4-carboxylate + L-aspartate + ATP = (2S)-2-[5-amino-1-(5-phospho-beta-D-ribosyl)imidazole-4-carboxamido]succinate + ADP + phosphate + 2 H(+). It functions in the pathway purine metabolism; IMP biosynthesis via de novo pathway; 5-amino-1-(5-phospho-D-ribosyl)imidazole-4-carboxamide from 5-amino-1-(5-phospho-D-ribosyl)imidazole-4-carboxylate: step 1/2. The sequence is that of Phosphoribosylaminoimidazole-succinocarboxamide synthase from Mycolicibacterium vanbaalenii (strain DSM 7251 / JCM 13017 / BCRC 16820 / KCTC 9966 / NRRL B-24157 / PYR-1) (Mycobacterium vanbaalenii).